The sequence spans 441 residues: Velvet complex subunit B (441 aa).

Residues 1–173 form the Velvet domain; the sequence is MSTLGQGDFE…SDQGVRLRLR (173 aa). Disordered stretches follow at residues 200-220, 234-295, and 341-396; these read GYLP…PHHL, RSRS…ETDT, and MPSP…PSYA. Low complexity-rich tracts occupy residues 272–283 and 361–375; these read DGASPDSPHPSS and PAGA…FSPG.

The protein belongs to the velvet family. VelB subfamily. Component of the heterotrimeric velvet complex composed of laeA, veA and velB; VeA acting as a bridging protein between laeA and velB.

It is found in the nucleus. It localises to the cytoplasm. Component of the velvet transcription factor complex that controls sexual/asexual developmental ratio in response to light, promoting sexual development in the darkness while stimulating asexual sporulation under illumination. The velvet complex acts as a global regulator for secondary metabolite gene expression and is required for the production of chaetoglobosin A. The chain is Velvet complex subunit B from Chaetomium globosum (strain ATCC 6205 / CBS 148.51 / DSM 1962 / NBRC 6347 / NRRL 1970) (Soil fungus).